The chain runs to 422 residues: E3 ubiquitin-protein ligase IE2 (422 aa).

The segment covering 1 to 10 has biased composition (polar residues); the sequence is MSRQINAVTP. Disordered stretches follow at residues 1-86 and 165-215; these read MSRQ…VQII and SPRS…EGEE. Residues 14 to 26 are compositionally biased toward basic residues; the sequence is SRRHRLSLSRRRI. Residues 36-63 are compositionally biased toward low complexity; the sequence is PSSSSRSQPSSSSRSQPYSSSRSQPYSS. The segment covering 71-80 has biased composition (basic and acidic residues); the sequence is ERSQEQRVSE. A compositionally biased stretch (polar residues) spans 179 to 196; it reads DVLSQSPDLFDSPQSPQQ. Residues 200–215 show a composition bias toward acidic residues; that stretch reads ELEDEDEEEEEEEGEE. An RING-type; degenerate zinc finger spans residues 220 to 268; that stretch reads CNICFTTLKDTKNVDSSFVTSIDCNHAVCFKCYVRIIMDNSTYKCFCSA. The stretch at 314 to 414 forms a coiled coil; the sequence is IDLNDVERLE…RRNSELVAEL (101 aa).

Belongs to the alphabaculovirus IE2 protein family. In terms of assembly, homooligomer. Auto-ubiquitinated.

It localises to the host nucleus. The catalysed reaction is S-ubiquitinyl-[E2 ubiquitin-conjugating enzyme]-L-cysteine + [acceptor protein]-L-lysine = [E2 ubiquitin-conjugating enzyme]-L-cysteine + N(6)-ubiquitinyl-[acceptor protein]-L-lysine.. In terms of biological role, RING-finger E3 ubiquitin ligase that plays an important regulatory role during the initial stages of infection. Migrates to specific nuclear foci early in infection supposely to prepare the sites for viral replication by targeting and ubiquitinating host proteins. The sequence is that of E3 ubiquitin-protein ligase IE2 (IE2) from Bombyx mori nuclear polyhedrosis virus (BmNPV).